A 468-amino-acid polypeptide reads, in one-letter code: Cysteine--tRNA ligase (468 aa).

Zn(2+) is bound at residue Cys27. Positions 29 to 39 match the 'HIGH' region motif; the sequence is PTVYNYFHIGN. Zn(2+) is bound by residues Cys207, His232, and Glu236. A 'KMSKS' region motif is present at residues 264–268; sequence KMAKS. Lys267 serves as a coordination point for ATP.

Belongs to the class-I aminoacyl-tRNA synthetase family. As to quaternary structure, monomer. Zn(2+) serves as cofactor.

The protein localises to the cytoplasm. It catalyses the reaction tRNA(Cys) + L-cysteine + ATP = L-cysteinyl-tRNA(Cys) + AMP + diphosphate. This is Cysteine--tRNA ligase from Acetivibrio thermocellus (strain ATCC 27405 / DSM 1237 / JCM 9322 / NBRC 103400 / NCIMB 10682 / NRRL B-4536 / VPI 7372) (Clostridium thermocellum).